A 1378-amino-acid chain; its full sequence is DNA-directed RNA polymerase subunit beta (1378 aa).

Belongs to the RNA polymerase beta chain family. The RNAP catalytic core consists of 2 alpha, 1 beta, 1 beta' and 1 omega subunit. When a sigma factor is associated with the core the holoenzyme is formed, which can initiate transcription.

It carries out the reaction RNA(n) + a ribonucleoside 5'-triphosphate = RNA(n+1) + diphosphate. In terms of biological role, DNA-dependent RNA polymerase catalyzes the transcription of DNA into RNA using the four ribonucleoside triphosphates as substrates. The sequence is that of DNA-directed RNA polymerase subunit beta from Mesorhizobium japonicum (strain LMG 29417 / CECT 9101 / MAFF 303099) (Mesorhizobium loti (strain MAFF 303099)).